Reading from the N-terminus, the 236-residue chain is NADH-quinone oxidoreductase subunit C (236 aa).

A disordered region spans residues 1–20 (MSPPNQDAQEGRPDSPTAEV).

The protein belongs to the complex I 30 kDa subunit family. In terms of assembly, NDH-1 is composed of 14 different subunits. Subunits NuoB, C, D, E, F, and G constitute the peripheral sector of the complex.

It is found in the cell membrane. The enzyme catalyses a quinone + NADH + 5 H(+)(in) = a quinol + NAD(+) + 4 H(+)(out). Functionally, NDH-1 shuttles electrons from NADH, via FMN and iron-sulfur (Fe-S) centers, to quinones in the respiratory chain. The immediate electron acceptor for the enzyme in this species is believed to be a menaquinone. Couples the redox reaction to proton translocation (for every two electrons transferred, four hydrogen ions are translocated across the cytoplasmic membrane), and thus conserves the redox energy in a proton gradient. This is NADH-quinone oxidoreductase subunit C from Mycobacterium tuberculosis (strain ATCC 25177 / H37Ra).